A 266-amino-acid polypeptide reads, in one-letter code: Protein crossbronx-like (266 aa).

The UBC core domain occupies 15-178; the sequence is KQGYHILAEY…VQEQAIASRN (164 aa).

The protein belongs to the ubiquitin-conjugating enzyme family. FTS subfamily.

The protein is Protein crossbronx-like of Drosophila yakuba (Fruit fly).